The primary structure comprises 155 residues: Ribosomal RNA large subunit methyltransferase H (155 aa).

Leucine 72 and glycine 104 together coordinate S-adenosyl-L-methionine.

The protein belongs to the RNA methyltransferase RlmH family. In terms of assembly, homodimer.

It is found in the cytoplasm. It catalyses the reaction pseudouridine(1915) in 23S rRNA + S-adenosyl-L-methionine = N(3)-methylpseudouridine(1915) in 23S rRNA + S-adenosyl-L-homocysteine + H(+). Its function is as follows. Specifically methylates the pseudouridine at position 1915 (m3Psi1915) in 23S rRNA. The sequence is that of Ribosomal RNA large subunit methyltransferase H from Fusobacterium nucleatum subsp. nucleatum (strain ATCC 25586 / DSM 15643 / BCRC 10681 / CIP 101130 / JCM 8532 / KCTC 2640 / LMG 13131 / VPI 4355).